Reading from the N-terminus, the 274-residue chain is HTH-type transcriptional regulator GadX (274 aa).

An HTH araC/xylS-type domain is found at T145–R242. 2 consecutive DNA-binding regions (H-T-H motif) follow at residues A162–G183 and I209–Y232.

Homodimer.

Its function is as follows. Positively regulates the expression of about fifteen genes involved in acid resistance such as gadA, gadB and gadC. Depending on the conditions (growth phase and medium), can repress gadW. Negatively regulates perA expression in acidic conditions and positively regulates it in alkaline conditions. This Escherichia coli O127:H6 (strain E2348/69 / EPEC) protein is HTH-type transcriptional regulator GadX (gadX).